Reading from the N-terminus, the 410-residue chain is MDEGIPHLQERQLLEHRDFIGLDYSSLYMCKPKRSLKRDDTKDTYKLPHRLIEKKRRDRINECIAQLKDLLPEHLKLTTLGHLEKAVVLELTLKHLKALTALTEQQHQKIIALQNGERSLKSPVQADLDAFHSGFQTCAKEVLQYLARFESWTPREPRCAQLVSHLHAVATQLLTPQVPSGRGSGRAPCSAGAAAASGPERVARCVPVIQRTQPGTEPEHDTDTDSGYGGEAEQGRAAVKQEPPGDSSPAPKRPKLEARGALLGPEPALLGSLVALGGGAPFAQPAAAPFCLPFYLLSPSAAAYVQPWLDKSGLDKYLYPAAAAPFPLLYPGIPAAAAAAAAAAFPCLSSVLSPPPEKAGATAGAPFLAHEVAPPGPLRPQHAHSRTHLPRAVNPESSQEDATQPAKDAP.

Lys31 participates in a covalent cross-link: Glycyl lysine isopeptide (Lys-Gly) (interchain with G-Cter in SUMO2). Residues 44-99 (TYKLPHRLIEKKRRDRINECIAQLKDLLPEHLKLTTLGHLEKAVVLELTLKHLKAL) enclose the bHLH domain. A Glycyl lysine isopeptide (Lys-Gly) (interchain with G-Cter in SUMO2) cross-link involves residue Lys121. Positions 131-166 (FHSGFQTCAKEVLQYLARFESWTPREPRCAQLVSHL) constitute an Orange domain. Disordered regions lie at residues 209–255 (IQRT…KRPK) and 360–410 (GATA…KDAP). Residue Lys240 forms a Glycyl lysine isopeptide (Lys-Gly) (interchain with G-Cter in SUMO2) linkage.

In terms of assembly, homodimer. Heterodimer with BHLHE40/DEC1. Interacts with CIART. Interacts with BMAL1. Interacts with RXRA. Interacts with NR0B2 and HNF1A. As to expression, expressed in skeletal muscle, brain and lung.

Its subcellular location is the nucleus. Its function is as follows. Transcriptional repressor involved in the regulation of the circadian rhythm by negatively regulating the activity of the clock genes and clock-controlled genes. Acts as the negative limb of a novel autoregulatory feedback loop (DEC loop) which differs from the one formed by the PER and CRY transcriptional repressors (PER/CRY loop). Both these loops are interlocked as it represses the expression of PER1 and in turn is repressed by PER1/2 and CRY1/2. Represses the activity of the circadian transcriptional activator: CLOCK-BMAL1 heterodimer by competing for the binding to E-box elements (5'-CACGTG-3') found within the promoters of its target genes. Negatively regulates its own expression and the expression of DBP and BHLHE41/DEC2. Acts as a corepressor of RXR and the RXR-LXR heterodimers and represses the ligand-induced RXRA/B/G, NR1H3/LXRA, NR1H4 and VDR transactivation activity. Inhibits HNF1A-mediated transactivation of CYP1A2, CYP2E1 and CYP3A11. This is Class E basic helix-loop-helix protein 41 (Bhlhe41) from Mus musculus (Mouse).